Reading from the N-terminus, the 188-residue chain is Putative protein SSX9 (188 aa).

The region spanning 20–83 is the KRAB-related domain; that stretch reads KIQKAFDDIA…TGATDLQGND (64 aa). The interval 114 to 165 is disordered; that stretch reads KKPAEVGNDSKEVPEASGLQNDGKQLCPPGKPTTSEKINKASGPKRGKHAWT. The span at 115 to 127 shows a compositional bias: basic and acidic residues; it reads KPAEVGNDSKEVP. A Phosphoserine modification is found at Ser-123. A compositionally biased stretch (basic residues) spans 156 to 165; sequence GPKRGKHAWT.

Belongs to the SSX family. As to expression, not detected in any normal or tumor tissues.

In terms of biological role, could act as a modulator of transcription. The chain is Putative protein SSX9 from Homo sapiens (Human).